A 960-amino-acid polypeptide reads, in one-letter code: FYVE, RhoGEF and PH domain-containing protein 1 (960 aa).

2 disordered regions span residues 1-210 (MHGH…SSAA) and 226-355 (ASDR…REIP). Serine 48 is subject to Phosphoserine. Over residues 125–135 (PHPEGPQRLRS) the composition is skewed to basic and acidic residues. Pro residues-rich tracts occupy residues 137–149 (PGPP…PRPS), 156–165 (GPKPQVPPKP), and 173–190 (VLPP…PLPA). The short motif at 171–187 (PRVLPPPEPIPPPPSRP) is the SH3-binding element. Serine 205 carries the phosphoserine modification. Positions 231–251 (APGPCPVPPEPAMLPQPPPQP) are enriched in pro residues. Residues 273 to 284 (RDGEKVPNRDSG) are compositionally biased toward basic and acidic residues. Over residues 285 to 294 (IDSISSPSNS) the composition is skewed to low complexity. Positions 335-350 (VDSDLEEEEEEEEEEK) are enriched in acidic residues. One can recognise a DH domain in the interval 372–560 (KVFHIANELL…ATAAEHSNAA (189 aa)). The 100-residue stretch at 589 to 688 (ELIKEGHILK…WVQAINSTLL (100 aa)) folds into the PH 1 domain. The segment at 701 to 725 (NSTNRDDEDTPPNSPNVDLGKRAPT) is disordered. Residue threonine 710 is modified to Phosphothreonine. Residue serine 714 is modified to Phosphoserine. An FYVE-type zinc finger spans residues 729 to 789 (EKEVTMCMRC…VCTDCYVALH (61 aa)). The Zn(2+) site is built by cysteine 735, cysteine 738, cysteine 752, cysteine 755, cysteine 760, cysteine 763, cysteine 781, and cysteine 784. One can recognise a PH 2 domain in the interval 820-920 (NSVICSFLHY…WMAVLGRAGR (101 aa)). The tract at residues 922 to 960 (DTFCPGPTLSEDKEMEETPVAASGATAEPPEASQTRDKT) is disordered.

As to quaternary structure, interacts with DBNL/ABP1 and CTTN. Binds CDC42. May interact with CCPG1.

The protein localises to the cytoplasm. It localises to the cell projection. Its subcellular location is the lamellipodium. The protein resides in the ruffle. It is found in the cytoskeleton. Activates CDC42, a member of the Ras-like family of Rho- and Rac proteins, by exchanging bound GDP for free GTP. Plays a role in regulating the actin cytoskeleton and cell shape. The chain is FYVE, RhoGEF and PH domain-containing protein 1 (Fgd1) from Mus musculus (Mouse).